We begin with the raw amino-acid sequence, 205 residues long: Recombination protein RecR (205 aa).

Residues 59 to 74 (CARCNTFCEGGLCDIC) form a C4-type zinc finger. One can recognise a Toprim domain in the interval 82-177 (RRLMVVHMPA…KVSRLSQGIP (96 aa)).

Belongs to the RecR family.

In terms of biological role, may play a role in DNA repair. It seems to be involved in an RecBC-independent recombinational process of DNA repair. It may act with RecF and RecO. This is Recombination protein RecR from Neisseria gonorrhoeae (strain ATCC 700825 / FA 1090).